Reading from the N-terminus, the 849-residue chain is DNA mismatch repair protein MutS (849 aa).

Residue 602–609 (GPNMSGKS) participates in ATP binding.

The protein belongs to the DNA mismatch repair MutS family.

Functionally, this protein is involved in the repair of mismatches in DNA. It is possible that it carries out the mismatch recognition step. This protein has a weak ATPase activity. This is DNA mismatch repair protein MutS from Streptococcus mutans serotype c (strain ATCC 700610 / UA159).